Here is a 242-residue protein sequence, read N- to C-terminus: C-reactive protein 3.3 (242 aa).

Positions 1–24 (MKTFHGPTCGTAVSLCLLLFLTSA) are cleaved as a signal peptide. The Pentraxin (PTX) domain maps to 30 to 241 (ITSKVKFPPS…GVVLSPNEIC (212 aa)). Positions 60 and 63 each coordinate phosphocholine. Cystine bridges form between cysteine 62–cysteine 125 and cysteine 112–cysteine 144. 2 residues coordinate Ca(2+): aspartate 85 and asparagine 86. Asparagine 147 is a glycosylation site (N-linked (GlcNAc...) asparagine). Ca(2+) contacts are provided by glutamine 169, aspartate 170, and glutamine 180. A disulfide bridge connects residues cysteine 207 and cysteine 241.

Belongs to the pentraxin family. In terms of assembly, homopentamer. Pentraxin (or pentaxin) have a discoid arrangement of 5 non-covalently bound subunits. Ca(2+) serves as cofactor.

It is found in the secreted. Its function is as follows. Might serve the role of immunoglobulins. This Limulus polyphemus (Atlantic horseshoe crab) protein is C-reactive protein 3.3.